The chain runs to 184 residues: Gremlin-1 (184 aa).

The N-terminal stretch at 1–24 (MVRTLYAIGAVFLLTGFLLPTAEG) is a signal peptide. The tract at residues 24-77 (GRKRNRGSQGAIPPPDKDQPNDSEQMQTQQQSGSRHRERGKGTSMPAEEVLESS) is disordered. An N-linked (GlcNAc...) asparagine glycan is attached at Asn-44. Residues 45 to 56 (DSEQMQTQQQSG) show a composition bias toward polar residues. Disulfide bonds link Cys-94–Cys-144, Cys-108–Cys-158, Cys-118–Cys-176, and Cys-122–Cys-178. Residues 94-184 (CKTQPLKQTI…ECRCISIDLD (91 aa)) form the CTCK domain.

It belongs to the DAN family.

The protein localises to the secreted. Cytokine that may play a role in the development of the medial pallium and during optic nerve and pecten development by modulating BMP signaling. The chain is Gremlin-1 (GREM1) from Gallus gallus (Chicken).